The chain runs to 819 residues: DNA topoisomerase 4 subunit A (819 aa).

The region spanning 30 to 496 (LPDIRDGLKP…QIIEIDTASL (467 aa)) is the Topo IIA-type catalytic domain. The O-(5'-phospho-DNA)-tyrosine intermediate role is filled by Tyr118.

This sequence belongs to the type II topoisomerase GyrA/ParC subunit family. ParC type 2 subfamily. Heterotetramer composed of ParC and ParE.

It localises to the cell membrane. It catalyses the reaction ATP-dependent breakage, passage and rejoining of double-stranded DNA.. Topoisomerase IV is essential for chromosome segregation. It relaxes supercoiled DNA. Performs the decatenation events required during the replication of a circular DNA molecule. This is DNA topoisomerase 4 subunit A from Streptococcus pyogenes serotype M3 (strain SSI-1).